The sequence spans 403 residues: MGRAKKVVLAYSGGVDTSVCIPYLKQEWGVEDVITFAADLGQGDELEPIRQKALDAGASQSLVGDLIEPFIKDFAFPAIRANALYEGRYPLSTALARPLIAKRLVEVAREVGADAVAHGCTGKGNDQVRFDVAIAALAPDLKVLTPAREWGMSREETIAYGERFGLPAPVSKKSPYSIDLNLLGRSIEAGPLEDPMVAPPEEVFAMTRSVEAAPDASEEIEIAFEAGNPVGINGQKLDPVALIREANRLAGIHGIGRLDMIENRVVGIKSREIYETPGLLLFIQAHQELESLTLAADVLRSKRQLEMQWADLVYQGLWFGPLKDALDGFMDRTQATVNGVVRLRLHKGTATVTGRGSADSSLYVPEMASYGSEDQFDHRAAEGFIYVWGLPTRLWSASQRRSS.

ATP contacts are provided by residues 10-18 (AYSGGVDTS) and A38. Residue Y89 coordinates L-citrulline. G119 is an ATP binding site. L-aspartate is bound by residues T121, N125, and D126. N125 is an L-citrulline binding site. Residues R129, S177, S186, E262, and Y274 each coordinate L-citrulline.

Belongs to the argininosuccinate synthase family. Type 1 subfamily. Homotetramer.

The protein localises to the cytoplasm. It catalyses the reaction L-citrulline + L-aspartate + ATP = 2-(N(omega)-L-arginino)succinate + AMP + diphosphate + H(+). It participates in amino-acid biosynthesis; L-arginine biosynthesis; L-arginine from L-ornithine and carbamoyl phosphate: step 2/3. The chain is Argininosuccinate synthase from Synechococcus sp. (strain CC9605).